The sequence spans 245 residues: Polyhedrin (245 aa).

It belongs to the polyhedrin family.

Its function is as follows. Major component of the virus occlusion bodies, which are large proteinaceous structures (polyhedra), that protect the virus from the outside environment for extended periods until they are ingested by insect larvae. This is Polyhedrin from Lepidoptera (butterflies and moths).